A 329-amino-acid chain; its full sequence is ATP phosphoribosyltransferase regulatory subunit (329 aa).

This sequence belongs to the class-II aminoacyl-tRNA synthetase family. HisZ subfamily. In terms of assembly, heteromultimer composed of HisG and HisZ subunits.

Its subcellular location is the cytoplasm. Its pathway is amino-acid biosynthesis; L-histidine biosynthesis; L-histidine from 5-phospho-alpha-D-ribose 1-diphosphate: step 1/9. In terms of biological role, required for the first step of histidine biosynthesis. May allow the feedback regulation of ATP phosphoribosyltransferase activity by histidine. This is ATP phosphoribosyltransferase regulatory subunit from Streptococcus gordonii (strain Challis / ATCC 35105 / BCRC 15272 / CH1 / DL1 / V288).